A 341-amino-acid chain; its full sequence is L-threonine 3-dehydrogenase (341 aa).

Cysteine 38 lines the Zn(2+) pocket. Active-site charge relay system residues include threonine 40 and histidine 43. Zn(2+) contacts are provided by histidine 63, glutamate 64, cysteine 93, cysteine 96, cysteine 99, and cysteine 107. Residues isoleucine 175, aspartate 195, arginine 200, 262 to 264 (LGI), and 286 to 287 (IY) each bind NAD(+).

Belongs to the zinc-containing alcohol dehydrogenase family. In terms of assembly, homotetramer. Zn(2+) is required as a cofactor.

It localises to the cytoplasm. The enzyme catalyses L-threonine + NAD(+) = (2S)-2-amino-3-oxobutanoate + NADH + H(+). Its pathway is amino-acid degradation; L-threonine degradation via oxydo-reductase pathway; glycine from L-threonine: step 1/2. Functionally, catalyzes the NAD(+)-dependent oxidation of L-threonine to 2-amino-3-ketobutyrate. The protein is L-threonine 3-dehydrogenase of Shewanella woodyi (strain ATCC 51908 / MS32).